Here is a 412-residue protein sequence, read N- to C-terminus: Serine hydroxymethyltransferase (412 aa).

Residues L117 and G121–L123 each bind (6S)-5,6,7,8-tetrahydrofolate. The residue at position 226 (K226) is an N6-(pyridoxal phosphate)lysine.

The protein belongs to the SHMT family. Homodimer. Requires pyridoxal 5'-phosphate as cofactor.

The protein localises to the cytoplasm. It carries out the reaction (6R)-5,10-methylene-5,6,7,8-tetrahydrofolate + glycine + H2O = (6S)-5,6,7,8-tetrahydrofolate + L-serine. It functions in the pathway one-carbon metabolism; tetrahydrofolate interconversion. Its pathway is amino-acid biosynthesis; glycine biosynthesis; glycine from L-serine: step 1/1. Catalyzes the reversible interconversion of serine and glycine with tetrahydrofolate (THF) serving as the one-carbon carrier. This reaction serves as the major source of one-carbon groups required for the biosynthesis of purines, thymidylate, methionine, and other important biomolecules. Also exhibits THF-independent aldolase activity toward beta-hydroxyamino acids, producing glycine and aldehydes, via a retro-aldol mechanism. This is Serine hydroxymethyltransferase from Staphylococcus saprophyticus subsp. saprophyticus (strain ATCC 15305 / DSM 20229 / NCIMB 8711 / NCTC 7292 / S-41).